The chain runs to 449 residues: DNA-directed RNA polymerase subunit Rpo1C (449 aa).

A unknown region spans residues 1–68 (MQDVIKKIED…EGEELLKAVE (68 aa)). The segment at 69–449 (DEYLRILKVR…TGSVSVIMKK (381 aa)) is DNA-directed RNA polymerase subunit Rpo1C.

This sequence belongs to the RNA polymerase beta' chain family. In terms of assembly, part of the RNA polymerase complex.

It is found in the cytoplasm. The catalysed reaction is RNA(n) + a ribonucleoside 5'-triphosphate = RNA(n+1) + diphosphate. Functionally, DNA-dependent RNA polymerase (RNAP) catalyzes the transcription of DNA into RNA using the four ribonucleoside triphosphates as substrates. Forms part of the jaw domain. The protein is DNA-directed RNA polymerase subunit Rpo1C of Methanothermobacter thermautotrophicus (strain Winter) (Methanobacterium thermoautotrophicum).